The sequence spans 270 residues: uncharacterized protein (270 aa).

Disordered regions lie at residues methionine 1–proline 21 and proline 53–asparagine 77. Over residues serine 58 to lysine 75 the composition is skewed to basic and acidic residues. Residues glutamate 182–glutamate 270 adopt a coiled-coil conformation.

This is an uncharacterized protein from Plasmodium falciparum (isolate 3D7).